The following is a 933-amino-acid chain: Protein translocase subunit SecA (933 aa).

Residues Q87, 105 to 109, and D515 each bind ATP; that span reads GEGKT. 3 disordered regions span residues 567–588, 840–861, and 880–933; these read ESRR…PGSS, DVEA…RHAA, and AAAE…CGKL. Positions 845–856 are enriched in basic and acidic residues; it reads EEQRRQEAERMQ. Residues 880–897 are compositionally biased toward low complexity; sequence AAAEGDSAPTGGAQQQSA. A compositionally biased stretch (basic and acidic residues) spans 905-914; the sequence is VAREGPKVGR. Positions 918, 920, 929, and 930 each coordinate Zn(2+). Positions 924-933 are enriched in basic residues; sequence KKYKHCCGKL.

This sequence belongs to the SecA family. As to quaternary structure, monomer and homodimer. Part of the essential Sec protein translocation apparatus which comprises SecA, SecYEG and auxiliary proteins SecDF-YajC and YidC. Zn(2+) is required as a cofactor.

It localises to the cell inner membrane. The protein resides in the cytoplasm. It catalyses the reaction ATP + H2O + cellular proteinSide 1 = ADP + phosphate + cellular proteinSide 2.. Functionally, part of the Sec protein translocase complex. Interacts with the SecYEG preprotein conducting channel. Has a central role in coupling the hydrolysis of ATP to the transfer of proteins into and across the cell membrane, serving both as a receptor for the preprotein-SecB complex and as an ATP-driven molecular motor driving the stepwise translocation of polypeptide chains across the membrane. The protein is Protein translocase subunit SecA of Halorhodospira halophila (strain DSM 244 / SL1) (Ectothiorhodospira halophila (strain DSM 244 / SL1)).